The primary structure comprises 394 residues: uncharacterized protein (394 aa).

A run of 12 helical transmembrane segments spans residues 13 to 33 (LITT…TTMI), 35 to 55 (MAPT…VLPT), 73 to 95 (TTMT…TLTV), 110 to 130 (ALTV…HMVL), 152 to 172 (IHMV…PTVL), 179 to 198 (LMVL…TLTV), 216 to 236 (VLLA…TVLP), 241 to 261 (VLMV…HMVL), 267 to 287 (VLMV…PTVL), 293 to 313 (VLMV…TLTV), 340 to 360 (MMTL…VTTI), and 372 to 392 (ILLC…YVSA).

It localises to the membrane. This is an uncharacterized protein from Saccharomyces cerevisiae (strain ATCC 204508 / S288c) (Baker's yeast).